The chain runs to 405 residues: L-rhamnonate dehydratase (405 aa).

2 residues coordinate substrate: H33 and R59. D226, E252, and E280 together coordinate Mg(2+). The active-site Proton acceptor is the H329. E349 contacts substrate.

Belongs to the mandelate racemase/muconate lactonizing enzyme family. RhamD subfamily. As to quaternary structure, homooctamer; tetramer of dimers. Requires Mg(2+) as cofactor.

It catalyses the reaction L-rhamnonate = 2-dehydro-3-deoxy-L-rhamnonate + H2O. In terms of biological role, catalyzes the dehydration of L-rhamnonate to 2-keto-3-deoxy-L-rhamnonate (KDR). This chain is L-rhamnonate dehydratase, found in Escherichia coli (strain SMS-3-5 / SECEC).